The following is a 301-amino-acid chain: tRNA dimethylallyltransferase 1 (301 aa).

10-17 (GPTASGKT) lines the ATP pocket. 12–17 (TASGKT) provides a ligand contact to substrate. The tract at residues 35–38 (DSRQ) is interaction with substrate tRNA.

Belongs to the IPP transferase family. In terms of assembly, monomer. The cofactor is Mg(2+).

The enzyme catalyses adenosine(37) in tRNA + dimethylallyl diphosphate = N(6)-dimethylallyladenosine(37) in tRNA + diphosphate. Catalyzes the transfer of a dimethylallyl group onto the adenine at position 37 in tRNAs that read codons beginning with uridine, leading to the formation of N6-(dimethylallyl)adenosine (i(6)A). The polypeptide is tRNA dimethylallyltransferase 1 (Geotalea uraniireducens (strain Rf4) (Geobacter uraniireducens)).